Reading from the N-terminus, the 253-residue chain is Probable proteasome subunit alpha type-7 (253 aa).

Ser-104 is modified (phosphoserine).

This sequence belongs to the peptidase T1A family. In terms of assembly, the 26S proteasome consists of a 20S proteasome core and two 19S regulatory subunits. The 20S proteasome core is composed of 28 subunits that are arranged in four stacked rings, resulting in a barrel-shaped structure. The two end rings are each formed by seven alpha subunits, and the two central rings are each formed by seven beta subunits. The catalytic chamber with the active sites is on the inside of the barrel.

The protein localises to the cytoplasm. It is found in the nucleus. In terms of biological role, the proteasome is a multicatalytic proteinase complex which is characterized by its ability to cleave peptides with Arg, Phe, Tyr, Leu, and Glu adjacent to the leaving group at neutral or slightly basic pH. The proteasome has an ATP-dependent proteolytic activity. This Schizosaccharomyces pombe (strain 972 / ATCC 24843) (Fission yeast) protein is Probable proteasome subunit alpha type-7 (pre10).